Here is a 553-residue protein sequence, read N- to C-terminus: Solute carrier family 45 member 3 (553 aa).

The next 11 helical transmembrane spans lie at 19–39, 52–72, 88–108, 120–140, 161–181, 198–218, 275–295, 323–343, 353–373, 382–402, and 522–542; these read LLVN…ITYV, FMTM…PLLG, FIWA…RAGW, LELA…QVCF, YSVY…LPAI, CLFG…LLVA, FVAE…YTDF, MGSL…LVMD, AVYL…CLSH, AALT…LASL, and AYMV…TQVV.

It belongs to the glycoside-pentoside-hexuronide (GPH) cation symporter transporter (TC 2.A.2) family. As to expression, prostate specific. Expressed in all prostatic glandular cells. Expressed both in normal and cancerous prostates.

The protein resides in the membrane. It carries out the reaction sucrose(out) + H(+)(out) = sucrose(in) + H(+)(in). Its function is as follows. Proton-associated sucrose transporter. May be able to transport also glucose and fructose. This is Solute carrier family 45 member 3 from Homo sapiens (Human).